Here is a 279-residue protein sequence, read N- to C-terminus: Acetylglutamate kinase (279 aa).

Residues 64-65 (GG), Arg86, and Asn177 contribute to the substrate site.

Belongs to the acetylglutamate kinase family. ArgB subfamily.

It localises to the cytoplasm. It carries out the reaction N-acetyl-L-glutamate + ATP = N-acetyl-L-glutamyl 5-phosphate + ADP. Its pathway is amino-acid biosynthesis; L-arginine biosynthesis; N(2)-acetyl-L-ornithine from L-glutamate: step 2/4. Its function is as follows. Catalyzes the ATP-dependent phosphorylation of N-acetyl-L-glutamate. This is Acetylglutamate kinase from Campylobacter jejuni subsp. jejuni serotype O:2 (strain ATCC 700819 / NCTC 11168).